Reading from the N-terminus, the 418-residue chain is UDP-N-acetylglucosamine 1-carboxyvinyltransferase 2 (418 aa).

Residue 22–23 (KN) participates in phosphoenolpyruvate binding. UDP-N-acetyl-alpha-D-glucosamine is bound at residue Arg92. Residue Cys116 is the Proton donor of the active site. Cys116 carries the 2-(S-cysteinyl)pyruvic acid O-phosphothioketal modification. 2 residues coordinate UDP-N-acetyl-alpha-D-glucosamine: Asp305 and Ile327.

Belongs to the EPSP synthase family. MurA subfamily.

Its subcellular location is the cytoplasm. The catalysed reaction is phosphoenolpyruvate + UDP-N-acetyl-alpha-D-glucosamine = UDP-N-acetyl-3-O-(1-carboxyvinyl)-alpha-D-glucosamine + phosphate. It participates in cell wall biogenesis; peptidoglycan biosynthesis. Functionally, cell wall formation. Adds enolpyruvyl to UDP-N-acetylglucosamine. The sequence is that of UDP-N-acetylglucosamine 1-carboxyvinyltransferase 2 from Mesorhizobium japonicum (strain LMG 29417 / CECT 9101 / MAFF 303099) (Mesorhizobium loti (strain MAFF 303099)).